Here is a 227-residue protein sequence, read N- to C-terminus: Enolase-phosphatase E1 (227 aa).

The protein belongs to the HAD-like hydrolase superfamily. MasA/MtnC family. As to quaternary structure, monomer. Mg(2+) is required as a cofactor.

The enzyme catalyses 5-methylsulfanyl-2,3-dioxopentyl phosphate + H2O = 1,2-dihydroxy-5-(methylsulfanyl)pent-1-en-3-one + phosphate. Its pathway is amino-acid biosynthesis; L-methionine biosynthesis via salvage pathway; L-methionine from S-methyl-5-thio-alpha-D-ribose 1-phosphate: step 3/6. The protein operates within amino-acid biosynthesis; L-methionine biosynthesis via salvage pathway; L-methionine from S-methyl-5-thio-alpha-D-ribose 1-phosphate: step 4/6. Functionally, bifunctional enzyme that catalyzes the enolization of 2,3-diketo-5-methylthiopentyl-1-phosphate (DK-MTP-1-P) into the intermediate 2-hydroxy-3-keto-5-methylthiopentenyl-1-phosphate (HK-MTPenyl-1-P), which is then dephosphorylated to form the acireductone 1,2-dihydroxy-3-keto-5-methylthiopentene (DHK-MTPene). This chain is Enolase-phosphatase E1, found in Pseudomonas syringae pv. syringae (strain B728a).